Consider the following 432-residue polypeptide: D-amino acid dehydrogenase (432 aa).

An FAD-binding site is contributed by 3–17; that stretch reads VVILGSGVVGVTSAW.

This sequence belongs to the DadA oxidoreductase family. Requires FAD as cofactor.

It is found in the cell inner membrane. It carries out the reaction a D-alpha-amino acid + A + H2O = a 2-oxocarboxylate + AH2 + NH4(+). The protein operates within amino-acid degradation; D-alanine degradation; NH(3) and pyruvate from D-alanine: step 1/1. Functionally, oxidative deamination of D-amino acids. This Salmonella typhi protein is D-amino acid dehydrogenase.